The primary structure comprises 412 residues: MKIRTLSGSVLEPPSAVRATPGTSMLKLEPGGSTIPKIPFIRPSFPGPAELAEDFVQIAQANWYTNFGPNERRFARALRDYLGPHLHVATLANGTLALLAALHVSFGAGTRDRYLLMPSFTFVGVAQAALWTGYRPWFIDIDANTWQPCVHSACAVIERFRDRIAGILLANVFGVGNPQISVWEELAAEWELPIVLDSAAGFGSTYADGERLGGRGACEIFSFHATKPFAVGEGGALVSRDPRLVEHAYKFQNFGLVQTRESIQLGMNGKLSEISAAIGLRQLVGLDRRLASRRKVLECYRTGMADAGVRFQDNANVASLCFASACCTSADHKAAVLGSLRRHAIEARDYYNPPQHRHPYFVTNAELVESTDLAVTADICSRIVSLPVHDHMAPDDVARVVAAVQEAEVRGE.

Lys-227 is modified (N6-(pyridoxal phosphate)lysine).

The protein belongs to the DegT/DnrJ/EryC1 family.

The polypeptide is Protein Mb3436c (Mycobacterium bovis (strain ATCC BAA-935 / AF2122/97)).